The sequence spans 749 residues: Polyribonucleotide nucleotidyltransferase (749 aa).

Residues D487 and D493 each coordinate Mg(2+). The region spanning 554 to 613 is the KH domain; it reads PSTTTIKIDKDKIRDIIGPGGKIIKEICETSGAKIDISDDGTVSVYASDRDKLKVALDKI. The 69-residue stretch at 623-691 folds into the S1 motif domain; sequence GEIFNGTVVK…NKGKAKLTIK (69 aa). The segment at 691-749 is disordered; sequence KNADKDKSSNNTKPKTNVNNTNKDNSEPEQRRDSSKKRAWNEDNNAETAEVITERKYFN. The segment covering 699-713 has biased composition (low complexity); sequence SNNTKPKTNVNNTNK. Over residues 714–723 the composition is skewed to basic and acidic residues; the sequence is DNSEPEQRRD.

Belongs to the polyribonucleotide nucleotidyltransferase family. The cofactor is Mg(2+).

Its subcellular location is the cytoplasm. The enzyme catalyses RNA(n+1) + phosphate = RNA(n) + a ribonucleoside 5'-diphosphate. In terms of biological role, involved in mRNA degradation. Catalyzes the phosphorolysis of single-stranded polyribonucleotides processively in the 3'- to 5'-direction. The protein is Polyribonucleotide nucleotidyltransferase of Rickettsia conorii (strain ATCC VR-613 / Malish 7).